A 445-amino-acid chain; its full sequence is MSKKYFGTDGIRGRVGEYPITPDFMLKLGWAAGKAFRRQGICRVLVGKDTRISGYMFESVLEAGLSAAGADVLLLGPMPTPAIAYLTRTFHAEAGIVISASHNPHYDNGIKFFSGQGTKLPDELELVIEELLDNPMTVVDSAQLGKVSRINDAAGRYIEFCKSSVPTGTSFAGLKMVVDCAHGATYKVAPNVFRELGAEVAVLAAQPNGLNINDRCGSTDIVALQAEVLMQRADLGVAFDGDGDRVLMVDHTGAVVDGDELLFLIARDMHEHGKLQGGVVGTLMSNLGLELALQDMGIPFVRAKVGDRYVMAELLARNWQLGGEGSGHIVCCHHSTTGDGIIAALQVLRALKHRGQRLAEARQGMRKFPQVLVNVRYAGDKDPVGHPVVQEACERVTEQMAGRGRVLLRKSGTEPLVRVMVEGDDESQVRLHADNLAKIVSDVCA.

Serine 101 acts as the Phosphoserine intermediate in catalysis. Residues serine 101, aspartate 240, aspartate 242, and aspartate 244 each coordinate Mg(2+). Serine 101 carries the post-translational modification Phosphoserine.

The protein belongs to the phosphohexose mutase family. Mg(2+) is required as a cofactor. Activated by phosphorylation.

The enzyme catalyses alpha-D-glucosamine 1-phosphate = D-glucosamine 6-phosphate. Catalyzes the conversion of glucosamine-6-phosphate to glucosamine-1-phosphate. In Azotobacter vinelandii (strain DJ / ATCC BAA-1303), this protein is Phosphoglucosamine mutase.